The sequence spans 143 residues: 3-hydroxyacyl-[acyl-carrier-protein] dehydratase FabZ (143 aa).

The active site involves H47.

It belongs to the thioester dehydratase family. FabZ subfamily.

It localises to the cytoplasm. The catalysed reaction is a (3R)-hydroxyacyl-[ACP] = a (2E)-enoyl-[ACP] + H2O. Involved in unsaturated fatty acids biosynthesis. Catalyzes the dehydration of short chain beta-hydroxyacyl-ACPs and long chain saturated and unsaturated beta-hydroxyacyl-ACPs. This is 3-hydroxyacyl-[acyl-carrier-protein] dehydratase FabZ from Rickettsia canadensis (strain McKiel).